The following is a 232-amino-acid chain: Probable metallo-hydrolase M6_Spy0554 (232 aa).

Zn(2+) is bound by residues His-75, His-77, Asp-79, His-80, His-155, Asp-174, and His-215.

Requires Zn(2+) as cofactor.

This chain is Probable metallo-hydrolase M6_Spy0554, found in Streptococcus pyogenes serotype M6 (strain ATCC BAA-946 / MGAS10394).